The primary structure comprises 1574 residues: Myosin-2 (1574 aa).

Position 2 is an N-acetylserine (serine 2). The Myosin N-terminal SH3-like domain maps to 4–57 (EVGTRCWYPHKELGWIGAEVIKNEFNDGKYHLELQLEDDEIVSVDTKDLNNDKD). The 712-residue stretch at 70–781 (EATEDLTSLS…MLAYLEKLRS (712 aa)) folds into the Myosin motor domain. Position 164 to 171 (164 to 171 (GESGAGKT)) interacts with ATP. The actin-binding stretch occupies residues 443–523 (FIGVLDIYGF…LGILSLLDEE (81 aa)). 6 consecutive IQ domains span residues 784-806 (MHNS…QYLQ), 807-831 (ISQA…NDEM), 832-855 (KVNC…VFSV), 856-879 (LRTI…KQEH), 880-902 (EYNA…RFLR), and 903-932 (TKKD…DAKS). Residues 933 to 1088 (VNHLKEVSYK…RLQTAMSLGT (156 aa)) are a coiled coil. The tract at residues 1087–1574 (GTVTTSVLPQ…VAQQVVQDGH (488 aa)) is non alpha-helical, tail domain. Threonine 1097 is subject to Phosphothreonine. Serine 1121 carries the phosphoserine modification. A Dilute domain is found at 1226–1501 (AQVLTTIQKV…LRYVADIVKK (276 aa)).

The protein belongs to the TRAFAC class myosin-kinesin ATPase superfamily. Myosin family. In terms of assembly, homodimer. Interacts with calmodulin (CMD1) and the myosin light chain MLC1 through its IQ repeats. Binds to the membrane receptors SEC4 and VAC17 to transport secretory vesicles and the vacuole, respectively. Binds to KAR9, which transports BIM1-coated cytoplasmic microtubules that are attached to the spindle pole body into the emerging bud, thereby correctly orienting the mitotic spindle. Interacts with YPT11 and MMR1 to accelerate mitochondrial distribution to the bud. Interacts with SHE4 and localizes it to the bud tip. Interacts with RHO3 and SMY1, putative regulators of MYO2 function. Interacts with SRO7.

The protein localises to the bud neck. It is found in the bud tip. Its function is as follows. Myosin heavy chain that is required for the cell cycle-regulated transport of various organelles and proteins for their segregation. Functions by binding with its tail domain to receptor proteins on organelles and exerting force with its N-terminal motor domain against actin filaments, thereby transporting its cargo along polarized actin cables. Essential for the delivery of secretory vesicles to sites of active growth during bud emergence and cytokinesis. Required for segregation and inheritance of peroxisomes, late Golgi compartments, mitochondria and the vacuole to the daughter cell during cell division. Also required for correct alignment of the spindle during mitosis. The chain is Myosin-2 (MYO2) from Saccharomyces cerevisiae (strain ATCC 204508 / S288c) (Baker's yeast).